A 293-amino-acid chain; its full sequence is Elongation factor Ts (293 aa).

The interval 80–83 is involved in Mg(2+) ion dislocation from EF-Tu; that stretch reads TDFV.

It belongs to the EF-Ts family.

It is found in the cytoplasm. Functionally, associates with the EF-Tu.GDP complex and induces the exchange of GDP to GTP. It remains bound to the aminoacyl-tRNA.EF-Tu.GTP complex up to the GTP hydrolysis stage on the ribosome. The chain is Elongation factor Ts from Burkholderia ambifaria (strain MC40-6).